The following is a 764-amino-acid chain: 5-methyltetrahydropteroyltriglutamate--homocysteine methyltransferase (764 aa).

Residues 16-19 and Lys-121 each bind 5-methyltetrahydropteroyltri-L-glutamate; that span reads RELK. Residues 440-442 and Glu-493 each bind L-homocysteine; that span reads IGS. L-methionine-binding positions include 440–442 and Glu-493; that span reads IGS. 5-methyltetrahydropteroyltri-L-glutamate is bound by residues 524 to 525 and Trp-570; that span reads RC. Asp-608 lines the L-homocysteine pocket. Asp-608 serves as a coordination point for L-methionine. Position 614 (Glu-614) interacts with 5-methyltetrahydropteroyltri-L-glutamate. The Zn(2+) site is built by His-650, Cys-652, and Glu-674. His-703 (proton donor) is an active-site residue. Cys-735 contributes to the Zn(2+) binding site.

This sequence belongs to the vitamin-B12 independent methionine synthase family. It depends on Zn(2+) as a cofactor.

The catalysed reaction is 5-methyltetrahydropteroyltri-L-glutamate + L-homocysteine = tetrahydropteroyltri-L-glutamate + L-methionine. It functions in the pathway amino-acid biosynthesis; L-methionine biosynthesis via de novo pathway; L-methionine from L-homocysteine (MetE route): step 1/1. Functionally, catalyzes the transfer of a methyl group from 5-methyltetrahydrofolate to homocysteine resulting in methionine formation. This chain is 5-methyltetrahydropteroyltriglutamate--homocysteine methyltransferase, found in Burkholderia cenocepacia (strain ATCC BAA-245 / DSM 16553 / LMG 16656 / NCTC 13227 / J2315 / CF5610) (Burkholderia cepacia (strain J2315)).